The sequence spans 349 residues: MGVTELGKLIGREARREIKLENLAGRCIALDAYNALYQFLASIRQPDGTPLMDRQGRVTSHLSGLFYRTINLMEAGIKPVYVFDGKPPEFKLAEIEARRRVKEKAMEEVVKAIREGKRDDVAKYMKRVIFLTNEMVEDAKRLLTYMGVPWVQAPSEGEAQAAHMAKRGHCWAVGSQDYDSLLFGSPRLVRNLAVSPKRRSGEEVVEVSPEVVELDSVLKALKLKGREQLIDVAILLGTDYNPDGVPGVGPQKALKLVLEFGSLEKMLDTVLRGVSFPVDPLEIKRFFLNPPVTEEYALELKNVDERGLVNFLVGEHDFSEERVAKAVERLKKARARQKTSSLDSFFHGA.

The interval 1–102 (MGVTELGKLI…AEIEARRRVK (102 aa)) is N-domain. Residues D31, D84, E156, E158, D177, D179, and D239 each coordinate Mg(2+). The I-domain stretch occupies residues 120 to 261 (DVAKYMKRVI…KALKLVLEFG (142 aa)).

This sequence belongs to the XPG/RAD2 endonuclease family. FEN1 subfamily. Interacts with PCNA. PCNA stimulates the nuclease activity without altering cleavage specificity. Mg(2+) serves as cofactor.

Functionally, structure-specific nuclease with 5'-flap endonuclease and 5'-3' exonuclease activities involved in DNA replication and repair. During DNA replication, cleaves the 5'-overhanging flap structure that is generated by displacement synthesis when DNA polymerase encounters the 5'-end of a downstream Okazaki fragment. Binds the unpaired 3'-DNA end and kinks the DNA to facilitate 5' cleavage specificity. Cleaves one nucleotide into the double-stranded DNA from the junction in flap DNA, leaving a nick for ligation. Also involved in the base excision repair (BER) pathway. Acts as a genome stabilization factor that prevents flaps from equilibrating into structures that lead to duplications and deletions. Also possesses 5'-3' exonuclease activity on nicked or gapped double-stranded DNA. This chain is Flap endonuclease 1, found in Pyrobaculum neutrophilum (strain DSM 2338 / JCM 9278 / NBRC 100436 / V24Sta) (Thermoproteus neutrophilus).